The primary structure comprises 549 residues: Undecaprenyl phosphate-alpha-4-amino-4-deoxy-L-arabinose arabinosyl transferase 1 (549 aa).

12 helical membrane-spanning segments follow: residues 9-29 (LLLI…GLWI), 80-102 (LFGV…YLLA), 112-132 (SLAS…AGYA), 133-153 (NLDP…WFTF), 176-196 (FMTK…PYAI), 204-224 (LLIY…PWAL), 257-277 (WWYY…LLPA), 290-310 (SSGF…LSKG), 312-332 (LPAY…NTLV), 342-362 (LLAF…LALV), 377-397 (HLVL…LQAM), and 402-422 (LWAA…AALP).

It belongs to the glycosyltransferase 83 family.

The protein localises to the cell inner membrane. The catalysed reaction is 4-amino-4-deoxy-alpha-L-arabinopyranosyl di-trans,octa-cis-undecaprenyl phosphate + lipid IVA = lipid IIA + di-trans,octa-cis-undecaprenyl phosphate.. It participates in lipopolysaccharide metabolism; 4-amino-4-deoxy-beta-L-arabinose-lipid A biosynthesis. Its function is as follows. Catalyzes the transfer of the L-Ara4N moiety of the glycolipid undecaprenyl phosphate-alpha-L-Ara4N to lipid A. The modified arabinose is attached to lipid A and is required for resistance to polymyxin and cationic antimicrobial peptides. The chain is Undecaprenyl phosphate-alpha-4-amino-4-deoxy-L-arabinose arabinosyl transferase 1 from Pseudomonas fluorescens (strain ATCC BAA-477 / NRRL B-23932 / Pf-5).